The chain runs to 154 residues: 6,7-dimethyl-8-ribityllumazine synthase (154 aa).

5-amino-6-(D-ribitylamino)uracil is bound by residues F22, 56–58 (AFE), and 80–82 (TVI). 85-86 (ST) contacts (2S)-2-hydroxy-3-oxobutyl phosphate. The active-site Proton donor is the H88. A 5-amino-6-(D-ribitylamino)uracil-binding site is contributed by F113. R127 lines the (2S)-2-hydroxy-3-oxobutyl phosphate pocket.

The protein belongs to the DMRL synthase family.

The enzyme catalyses (2S)-2-hydroxy-3-oxobutyl phosphate + 5-amino-6-(D-ribitylamino)uracil = 6,7-dimethyl-8-(1-D-ribityl)lumazine + phosphate + 2 H2O + H(+). Its pathway is cofactor biosynthesis; riboflavin biosynthesis; riboflavin from 2-hydroxy-3-oxobutyl phosphate and 5-amino-6-(D-ribitylamino)uracil: step 1/2. In terms of biological role, catalyzes the formation of 6,7-dimethyl-8-ribityllumazine by condensation of 5-amino-6-(D-ribitylamino)uracil with 3,4-dihydroxy-2-butanone 4-phosphate. This is the penultimate step in the biosynthesis of riboflavin. The protein is 6,7-dimethyl-8-ribityllumazine synthase of Lactococcus lactis subsp. lactis (strain IL1403) (Streptococcus lactis).